Reading from the N-terminus, the 227-residue chain is MSQDLSHVPESIRMVLIGPPGAGKGTQAPNLTERFCACHLATGDMLRSQVAKQTPLGIEAKKIMDDGKLVSDEIMINMIKDELTNNQDCKKGFILDGFPRTIPQAEKLDEMLAQQGRPLEKAVELKIDDELLVSRITGRLVHPASGRSYHKVFNPPKTEMKDDITGEDLVQRSDDNVEALKKRLTSYHKQTEPIVDFYKKTGIWAGVDASQPPKTVWSDILKCLGKN.

Residue 21-26 coordinates ATP; that stretch reads GAGKGT. The segment at 41–70 is NMP; it reads ATGDMLRSQVAKQTPLGIEAKKIMDDGKLV. AMP is bound by residues threonine 42, arginine 47, 68–70, 97–100, and glutamine 104; these read KLV and GFPR. The LID stretch occupies residues 138–175; sequence GRLVHPASGRSYHKVFNPPKTEMKDDITGEDLVQRSDD. ATP contacts are provided by residues arginine 139 and 148–149; that span reads SY. Residues arginine 172 and arginine 183 each contribute to the AMP site. Residue glutamine 211 coordinates ATP.

This sequence belongs to the adenylate kinase family. AK2 subfamily. Monomer.

It is found in the cytoplasm. The protein resides in the cytosol. Its subcellular location is the mitochondrion intermembrane space. The enzyme catalyses AMP + ATP = 2 ADP. In terms of biological role, catalyzes the reversible transfer of the terminal phosphate group between ATP and AMP. Plays an important role in cellular energy homeostasis and in adenine nucleotide metabolism. Adenylate kinase activity is critical for regulation of the phosphate utilization and the AMP de novo biosynthesis pathways. The polypeptide is Adenylate kinase (Kluyveromyces lactis (strain ATCC 8585 / CBS 2359 / DSM 70799 / NBRC 1267 / NRRL Y-1140 / WM37) (Yeast)).